The following is a 71-amino-acid chain: Prokaryotic ubiquitin-like protein Pup (71 aa).

Over residues M1–G18 the composition is skewed to low complexity. Positions M1–D42 are disordered. The interval E27–Y65 is ARC ATPase binding. Residues S29–E60 adopt a coiled-coil conformation. E71 is covalently cross-linked (Isoglutamyl lysine isopeptide (Glu-Lys) (interchain with K-? in acceptor proteins)).

The protein belongs to the prokaryotic ubiquitin-like protein family. Strongly interacts with the proteasome-associated ATPase ARC through a hydrophobic interface; the interacting region of Pup lies in its C-terminal half. There is one Pup binding site per ARC hexamer ring.

It functions in the pathway protein degradation; proteasomal Pup-dependent pathway. Its function is as follows. Protein modifier that is covalently attached to lysine residues of substrate proteins, thereby targeting them for proteasomal degradation. The tagging system is termed pupylation. The sequence is that of Prokaryotic ubiquitin-like protein Pup from Salinispora tropica (strain ATCC BAA-916 / DSM 44818 / JCM 13857 / NBRC 105044 / CNB-440).